A 207-amino-acid polypeptide reads, in one-letter code: Small ribosomal subunit protein uS4c (207 aa).

The S4 RNA-binding domain occupies 92-153 (MRLDNILFRL…PKTYQSILSK (62 aa)).

The protein belongs to the universal ribosomal protein uS4 family. Part of the 30S ribosomal subunit. Contacts protein S5. The interaction surface between S4 and S5 is involved in control of translational fidelity.

The protein localises to the plastid. Its subcellular location is the chloroplast. One of the primary rRNA binding proteins, it binds directly to 16S rRNA where it nucleates assembly of the body of the 30S subunit. In terms of biological role, with S5 and S12 plays an important role in translational accuracy. This is Small ribosomal subunit protein uS4c (rps4) from Equisetum laevigatum (Smooth horsetail).